A 962-amino-acid polypeptide reads, in one-letter code: Glycine dehydrogenase (decarboxylating) (962 aa).

Lysine 709 is subject to N6-(pyridoxal phosphate)lysine.

It belongs to the GcvP family. In terms of assembly, the glycine cleavage system is composed of four proteins: P, T, L and H. The cofactor is pyridoxal 5'-phosphate.

It carries out the reaction N(6)-[(R)-lipoyl]-L-lysyl-[glycine-cleavage complex H protein] + glycine + H(+) = N(6)-[(R)-S(8)-aminomethyldihydrolipoyl]-L-lysyl-[glycine-cleavage complex H protein] + CO2. Functionally, the glycine cleavage system catalyzes the degradation of glycine. The P protein binds the alpha-amino group of glycine through its pyridoxal phosphate cofactor; CO(2) is released and the remaining methylamine moiety is then transferred to the lipoamide cofactor of the H protein. The sequence is that of Glycine dehydrogenase (decarboxylating) from Shewanella pealeana (strain ATCC 700345 / ANG-SQ1).